The primary structure comprises 508 residues: Cytochrome P450 monooxygenase lepD (508 aa).

Residues 22-42 (IAAAVAVVASIVIYLALSSFF) traverse the membrane as a helical segment. 2 N-linked (GlcNAc...) asparagine glycosylation sites follow: Asn53 and Asn416. Residue Cys454 participates in heme binding.

Belongs to the cytochrome P450 family. It depends on heme as a cofactor.

It localises to the membrane. In terms of biological role, cytochrome P450 monooxygenase; part of the gene cluster 23 that mediates the biosynthesis of a family of 2-pyridones known as leporins. The hybrid PKS-NRPS synthetase lepA and the enoyl reductase lepG are responsible for fusion of phenylalanine with a hexaketide and subsequent release of the stable tetramic acid precursor, pre-leporin C. Because lepA lacks a designated enoylreductase (ER) domain, the required activity is provided the enoyl reductase lepG. It is possible that the dehydrogenase lepF also participates in production of pre-leporin C. Cytochrome P450 monooxygenase lepH is then required for the ring expansion step to yield leporin C. Leporin C is then presumably further oxidized by the N-hydroxylase lepD to form leporin B. LepI may possess a function in biosynthesis upstream of lepA. Leporin B is further oxidized in the presence of ferric ion to give the leporin B trimer-iron chelate, but whether or not this reaction is catalyzed by an enzyme in the pathway or by ferric ion is not determined yet. The polypeptide is Cytochrome P450 monooxygenase lepD (Aspergillus flavus (strain ATCC 200026 / FGSC A1120 / IAM 13836 / NRRL 3357 / JCM 12722 / SRRC 167)).